We begin with the raw amino-acid sequence, 250 residues long: Cyclin-Q (250 aa).

Met1 carries the post-translational modification N-acetylmethionine. The segment covering 1 to 10 (MEAVRPDSCE) has biased composition (basic and acidic residues). The disordered stretch occupies residues 1-22 (MEAVRPDSCERGTAAARAEERP).

The protein belongs to the cyclin family. Cyclin-like FAM58 subfamily. Associates with CDK10 to promote its kinase activity.

Its function is as follows. Activating cyclin for the cyclin-associated kinase CDK10. The sequence is that of Cyclin-Q (Ccnq) from Rattus norvegicus (Rat).